Here is a 238-residue protein sequence, read N- to C-terminus: N-(5'-phosphoribosyl)anthranilate isomerase (238 aa).

This sequence belongs to the TrpF family.

The enzyme catalyses N-(5-phospho-beta-D-ribosyl)anthranilate = 1-(2-carboxyphenylamino)-1-deoxy-D-ribulose 5-phosphate. It functions in the pathway amino-acid biosynthesis; L-tryptophan biosynthesis; L-tryptophan from chorismate: step 3/5. This chain is N-(5'-phosphoribosyl)anthranilate isomerase, found in Methanosarcina acetivorans (strain ATCC 35395 / DSM 2834 / JCM 12185 / C2A).